Reading from the N-terminus, the 93-residue chain is Consomatin G2 (93 aa).

Positions 1–18 (MQTAYWVMLMMMVCITAP) are cleaved as a signal peptide. Positions 19–69 (LPEGGKPNSGIRGLVPNDLTPQHTLRSLISRRQTDVLLDATLLTTPAPEQR) are excised as a propeptide. A disulfide bridge links Cys-72 with Cys-77. Residue Trp-74 is modified to D-tryptophan. A propeptide spanning residues 79–93 (WRPYPWRRRDLNGKR) is cleaved from the precursor.

The protein belongs to the conotoxin C superfamily. Consomatin family. Expressed by the venom duct.

The protein resides in the secreted. In terms of biological role, moderately activates human somatostatin receptors (SSTR) with a preferential activation of SSTR1 and SSTR4. In vivo, does not cause behavioral changes in mice within a few minutes of intracranial injection, but causes a progressive loss of movement thereafter. Four to five hours after injection, mice recover, even with the highest dose tested. Shows antinociception and antihyperalgesia activities in two mouse models of acute pain, most probably by acting outside the central nervous system. The chain is Consomatin G2 from Conus geographus (Geography cone).